The chain runs to 472 residues: Uronate isomerase (472 aa).

It belongs to the metallo-dependent hydrolases superfamily. Uronate isomerase family.

It catalyses the reaction D-glucuronate = D-fructuronate. The enzyme catalyses aldehydo-D-galacturonate = keto-D-tagaturonate. Its pathway is carbohydrate metabolism; pentose and glucuronate interconversion. This Xanthomonas axonopodis pv. citri (strain 306) protein is Uronate isomerase.